The sequence spans 590 residues: MLRSHAAGSLRPADAGQNVTLAGWVARRRDHGGVIFIDLRDASGVSQVVFREGAVLEAAHRLRAEFCVAVEGVVEVRPEGNENPEIPTGGIEVNATSLTVLGESAPLPFQLDDEAGEEARLKYRYLDLRREGPGKALRLRSKVNAAAREVLARHDFVEIETPTMTRSTPEGARDFLVPARLQPGSFYALPQSPQLFKQLLMVAGMERYYQIARCYRDEDFRADRQPEFTQLDMEMSFVDADDVIAVSEEILKALWALIGHDLPTPLPRITYAEAMHRFGTDKPDLRFGLELVECKEFFADTTFRVFQAPYVGAVVMPGGASQPRRTLDGWQEWAKQRGAKGLAYVLVGDDGTLGGPVAKNLTDAERDGLAAHVGANPGDCIFFAAGPPKSSRALLGAARIEIAKRLDMIDPDAWAFTWVVDWPLFEMAEDATAAGDVAVGSGAWTAVHHAFTAPQPQSEATFDTDPAGALADAYDIVCNGNEIGGGSIRIHRRDVQERVFAMMGIEHDEAQEKFGFLLDAFTFGAPPHGGIAFGWDRITALLARMDSIREVIAFPKSGGGADPLTGAPAPITPQQRRESGIDAKPKKDGE.

Glutamate 170 contacts L-aspartate. The interval 194–197 (QLFK) is aspartate. Arginine 216 is a binding site for L-aspartate. ATP-binding positions include 216–218 (RDE) and glutamine 225. Histidine 448 provides a ligand contact to L-aspartate. Residue glutamate 482 coordinates ATP. Arginine 489 is a binding site for L-aspartate. 534–537 (GWDR) is a binding site for ATP. Residues 557–590 (SGGGADPLTGAPAPITPQQRRESGIDAKPKKDGE) form a disordered region. The span at 575–590 (QRRESGIDAKPKKDGE) shows a compositional bias: basic and acidic residues.

It belongs to the class-II aminoacyl-tRNA synthetase family. Type 1 subfamily. In terms of assembly, homodimer.

It is found in the cytoplasm. It catalyses the reaction tRNA(Asx) + L-aspartate + ATP = L-aspartyl-tRNA(Asx) + AMP + diphosphate. In terms of biological role, aspartyl-tRNA synthetase with relaxed tRNA specificity since it is able to aspartylate not only its cognate tRNA(Asp) but also tRNA(Asn). Reaction proceeds in two steps: L-aspartate is first activated by ATP to form Asp-AMP and then transferred to the acceptor end of tRNA(Asp/Asn). In Mycobacterium sp. (strain KMS), this protein is Aspartate--tRNA(Asp/Asn) ligase.